Here is a 162-residue protein sequence, read N- to C-terminus: uncharacterized protein (162 aa).

3 helical membrane passes run 28–50 (ALALALLPRSSLLWYLLFAVCFF), 57–76 (LLLLSLVLFGFVVPSFDPWL), and 108–130 (YNTMIAGGLVAGALCYLPCYALA).

It is found in the cell membrane. This is an uncharacterized protein from Treponema pallidum (strain Nichols).